The primary structure comprises 727 residues: Elongation factor 2 (727 aa).

Positions 19–260 (DQIRNMGICA…MAITHLPNPL (242 aa)) constitute a tr-type G domain. GTP contacts are provided by residues 28–35 (AHIDHGKT), 94–98 (DTPGH), and 148–151 (NKVD). At H603 the chain carries Diphthamide.

Belongs to the TRAFAC class translation factor GTPase superfamily. Classic translation factor GTPase family. EF-G/EF-2 subfamily.

The protein localises to the cytoplasm. In terms of biological role, catalyzes the GTP-dependent ribosomal translocation step during translation elongation. During this step, the ribosome changes from the pre-translocational (PRE) to the post-translocational (POST) state as the newly formed A-site-bound peptidyl-tRNA and P-site-bound deacylated tRNA move to the P and E sites, respectively. Catalyzes the coordinated movement of the two tRNA molecules, the mRNA and conformational changes in the ribosome. In Methanococcus maripaludis (strain C6 / ATCC BAA-1332), this protein is Elongation factor 2.